We begin with the raw amino-acid sequence, 293 residues long: Protease HtpX (293 aa).

2 helical membrane-spanning segments follow: residues 4 to 24 (IGLF…VLSL) and 38 to 58 (LTNL…ISLF). His-145 is a binding site for Zn(2+). Residue Glu-146 is part of the active site. His-149 is a Zn(2+) binding site. 2 consecutive transmembrane segments (helical) span residues 156–176 (ITLS…ARII) and 193–213 (IAFF…ASMI). Glu-222 is a binding site for Zn(2+).

It belongs to the peptidase M48B family. It depends on Zn(2+) as a cofactor.

It localises to the cell inner membrane. The chain is Protease HtpX from Cellvibrio japonicus (strain Ueda107) (Pseudomonas fluorescens subsp. cellulosa).